The following is a 71-amino-acid chain: Sec-independent protein translocase protein TatA (71 aa).

Residues 1–21 (MGSFSIWHWLIVLVVVLLLFG) form a helical membrane-spanning segment. Residues 47–71 (AEEAKTVEHRTDEPVGEVKQKASKS) form a disordered region. Residues 49 to 71 (EAKTVEHRTDEPVGEVKQKASKS) show a composition bias toward basic and acidic residues.

Belongs to the TatA/E family. In terms of assembly, the Tat system comprises two distinct complexes: a TatABC complex, containing multiple copies of TatA, TatB and TatC subunits, and a separate TatA complex, containing only TatA subunits. Substrates initially bind to the TatABC complex, which probably triggers association of the separate TatA complex to form the active translocon.

Its subcellular location is the cell inner membrane. Functionally, part of the twin-arginine translocation (Tat) system that transports large folded proteins containing a characteristic twin-arginine motif in their signal peptide across membranes. TatA could form the protein-conducting channel of the Tat system. This Chelativorans sp. (strain BNC1) protein is Sec-independent protein translocase protein TatA.